The sequence spans 136 residues: Large-conductance mechanosensitive channel (136 aa).

3 helical membrane passes run 15–35 (IDLAIGVIIGGAFGSLVNSIV), 38–58 (IFMPIIGLITGGIDFSNMFIQ), and 80–100 (GHFITLLINFLIIAWVLFFFV).

This sequence belongs to the MscL family. As to quaternary structure, homopentamer.

It is found in the cell inner membrane. Functionally, channel that opens in response to stretch forces in the membrane lipid bilayer. May participate in the regulation of osmotic pressure changes within the cell. The chain is Large-conductance mechanosensitive channel from Bartonella tribocorum (strain CIP 105476 / IBS 506).